The primary structure comprises 820 residues: Cell division control protein 48 homolog C (820 aa).

Disordered stretches follow at residues 72–157 and 169–188; these read RVKD…RFDL and LNSS…VEVE. Over residues 76-87 the composition is skewed to acidic residues; that stretch reads EDEDDNIGDEEG. Residues 85–122 are a coiled coil; that stretch reads EEGSASQRKKQRRVDEKEEKLQRAEQSHLRKRNMERSV. Residues 97 to 119 show a composition bias toward basic and acidic residues; the sequence is RVDEKEEKLQRAEQSHLRKRNME. Over residues 121-142 the composition is skewed to low complexity; that stretch reads SVSSSPSSSSSSEDSGDVSTSE. Residues 274-281 and 569-576 each bind ATP; these read GPPGCGKT.

It belongs to the AAA ATPase family.

The protein localises to the nucleus. Its subcellular location is the cytoplasm. It is found in the cytoskeleton. It localises to the phragmoplast. Functionally, probably functions in cell division and growth processes. Interacts with certain SNAREs as part of specialized membrane fusion events where vesicles from the same organelle fuse (homotypic fusion). The polypeptide is Cell division control protein 48 homolog C (CDC48C) (Arabidopsis thaliana (Mouse-ear cress)).